Consider the following 657-residue polypeptide: UvrABC system protein B (657 aa).

Residues 29-416 form the Helicase ATP-binding domain; that stretch reads KLAEFQTNEQ…LSHNNVVEQL (388 aa). Position 42 to 49 (42 to 49) interacts with ATP; it reads GATGTGKT. The Beta-hairpin motif lies at 95–118; sequence YFDFYQPEAYLPAKGVYIEKSATV. Residues 435–597 enclose the Helicase C-terminal domain; the sequence is QVEDLVSEII…KTPMTVQKPI (163 aa). The UVR domain occupies 615-650; sequence AALIKQLTKEMKQAAANQNYELAIEIRDSIFELEKQ.

This sequence belongs to the UvrB family. In terms of assembly, forms a heterotetramer with UvrA during the search for lesions. Interacts with UvrC in an incision complex.

It is found in the cytoplasm. The UvrABC repair system catalyzes the recognition and processing of DNA lesions. A damage recognition complex composed of 2 UvrA and 2 UvrB subunits scans DNA for abnormalities. Upon binding of the UvrA(2)B(2) complex to a putative damaged site, the DNA wraps around one UvrB monomer. DNA wrap is dependent on ATP binding by UvrB and probably causes local melting of the DNA helix, facilitating insertion of UvrB beta-hairpin between the DNA strands. Then UvrB probes one DNA strand for the presence of a lesion. If a lesion is found the UvrA subunits dissociate and the UvrB-DNA preincision complex is formed. This complex is subsequently bound by UvrC and the second UvrB is released. If no lesion is found, the DNA wraps around the other UvrB subunit that will check the other stand for damage. In Mycoplasma pneumoniae (strain ATCC 29342 / M129 / Subtype 1) (Mycoplasmoides pneumoniae), this protein is UvrABC system protein B.